The chain runs to 165 residues: Ribosome maturation factor RimM (165 aa).

A PRC barrel domain is found at 89–161 (EADTHYIVDL…KIVVKPVRQW (73 aa)).

This sequence belongs to the RimM family. As to quaternary structure, binds ribosomal protein uS19.

The protein resides in the cytoplasm. In terms of biological role, an accessory protein needed during the final step in the assembly of 30S ribosomal subunit, possibly for assembly of the head region. Essential for efficient processing of 16S rRNA. May be needed both before and after RbfA during the maturation of 16S rRNA. It has affinity for free ribosomal 30S subunits but not for 70S ribosomes. In Clostridium botulinum (strain Alaska E43 / Type E3), this protein is Ribosome maturation factor RimM.